The following is a 505-amino-acid chain: 4-alpha-glucanotransferase (505 aa).

It belongs to the disproportionating enzyme family.

It localises to the cytoplasm. The enzyme catalyses Transfers a segment of a (1-&gt;4)-alpha-D-glucan to a new position in an acceptor, which may be glucose or a (1-&gt;4)-alpha-D-glucan.. The polypeptide is 4-alpha-glucanotransferase (malQ) (Synechocystis sp. (strain ATCC 27184 / PCC 6803 / Kazusa)).